The following is a 199-amino-acid chain: Holliday junction branch migration complex subunit RuvA (199 aa).

Positions 1 to 64 (MIARLTGMLA…EDAISLFGFR (64 aa)) are domain I. The domain II stretch occupies residues 65-143 (TVAEKEFFQV…KMDVAPSTKE (79 aa)). A flexible linker region spans residues 144-154 (AAPSEAPPEVA). The interval 154–199 (ADDVASALVNLGYKEAVVRKVLAEMAIESGASTEAVLRQALKILMK) is domain III.

It belongs to the RuvA family. In terms of assembly, homotetramer. Forms an RuvA(8)-RuvB(12)-Holliday junction (HJ) complex. HJ DNA is sandwiched between 2 RuvA tetramers; dsDNA enters through RuvA and exits via RuvB. An RuvB hexamer assembles on each DNA strand where it exits the tetramer. Each RuvB hexamer is contacted by two RuvA subunits (via domain III) on 2 adjacent RuvB subunits; this complex drives branch migration. In the full resolvosome a probable DNA-RuvA(4)-RuvB(12)-RuvC(2) complex forms which resolves the HJ.

It localises to the cytoplasm. In terms of biological role, the RuvA-RuvB-RuvC complex processes Holliday junction (HJ) DNA during genetic recombination and DNA repair, while the RuvA-RuvB complex plays an important role in the rescue of blocked DNA replication forks via replication fork reversal (RFR). RuvA specifically binds to HJ cruciform DNA, conferring on it an open structure. The RuvB hexamer acts as an ATP-dependent pump, pulling dsDNA into and through the RuvAB complex. HJ branch migration allows RuvC to scan DNA until it finds its consensus sequence, where it cleaves and resolves the cruciform DNA. This Geobacter metallireducens (strain ATCC 53774 / DSM 7210 / GS-15) protein is Holliday junction branch migration complex subunit RuvA.